The primary structure comprises 472 residues: Eukaryotic translation initiation factor 2 subunit 3 (472 aa).

Residues Gln-39–Val-247 form the tr-type G domain. Residues Gly-48 to Ser-55 form a G1 region. Ala-51–Thr-56 provides a ligand contact to GTP. Residues Asn-76–Lys-80 are G2. Residues Asp-134–Gly-137 form a G3 region. GTP is bound by residues Asn-190 to Asp-193 and Ser-225 to Gln-227. Positions Asn-190–Asp-193 are G4. The interval Ser-225 to Gln-227 is G5. Residues Gly-457–Val-469 form an interacts with cdc123 region.

Belongs to the TRAFAC class translation factor GTPase superfamily. Classic translation factor GTPase family. EIF2G subfamily. In terms of assembly, eukaryotic translation initiation factor 2 eIF2 is a heterotrimeric complex composed of an alpha (EIF2S1), a beta (EIF2S2) and a gamma (EIF2S3) chain. eIF2 is member of the 43S pre-initiation complex (43S PIC).

It localises to the cytoplasm. The protein localises to the cytosol. It catalyses the reaction GTP + H2O = GDP + phosphate + H(+). Its function is as follows. Member of the eIF2 complex that functions in the early steps of protein synthesis by forming a ternary complex with GTP and initiator tRNA. This complex binds to a 40S ribosomal subunit, followed by mRNA binding to form the 43S pre-initiation complex (43S PIC). Junction of the 60S ribosomal subunit to form the 80S initiation complex is preceded by hydrolysis of the GTP bound to eIF2 and release of an eIF2-GDP binary complex. In order for eIF2 to recycle and catalyze another round of initiation, the GDP bound to eIF2 must exchange with GTP by way of a reaction catalyzed by eIF-2B. The polypeptide is Eukaryotic translation initiation factor 2 subunit 3 (Danio rerio (Zebrafish)).